Reading from the N-terminus, the 388-residue chain is Succinate--CoA ligase [ADP-forming] subunit beta (388 aa).

Residues 9–244 (KQLFARYGLP…QSQEDPREAQ (236 aa)) enclose the ATP-grasp domain. ATP contacts are provided by residues Lys-46, 53–55 (GRG), Glu-99, Thr-102, and Glu-107. 2 residues coordinate Mg(2+): Asn-199 and Asp-213. Substrate contacts are provided by residues Asn-264 and 321-323 (GIV).

The protein belongs to the succinate/malate CoA ligase beta subunit family. Heterotetramer of two alpha and two beta subunits. Mg(2+) is required as a cofactor.

It carries out the reaction succinate + ATP + CoA = succinyl-CoA + ADP + phosphate. The enzyme catalyses GTP + succinate + CoA = succinyl-CoA + GDP + phosphate. It participates in carbohydrate metabolism; tricarboxylic acid cycle; succinate from succinyl-CoA (ligase route): step 1/1. Succinyl-CoA synthetase functions in the citric acid cycle (TCA), coupling the hydrolysis of succinyl-CoA to the synthesis of either ATP or GTP and thus represents the only step of substrate-level phosphorylation in the TCA. The beta subunit provides nucleotide specificity of the enzyme and binds the substrate succinate, while the binding sites for coenzyme A and phosphate are found in the alpha subunit. This is Succinate--CoA ligase [ADP-forming] subunit beta from Shigella boydii serotype 18 (strain CDC 3083-94 / BS512).